Reading from the N-terminus, the 517-residue chain is Serine hydroxymethyltransferase 1, mitochondrial (517 aa).

A mitochondrion-targeting transit peptide spans 1–31; sequence MAMALALRRLSSSADKPLQRLFNGGHLYSMS. K287 bears the N6-(pyridoxal phosphate)lysine mark.

The protein belongs to the SHMT family. As to quaternary structure, homotetramer. Pyridoxal 5'-phosphate is required as a cofactor.

The protein localises to the mitochondrion. It carries out the reaction (6R)-5,10-methylene-5,6,7,8-tetrahydrofolate + glycine + H2O = (6S)-5,6,7,8-tetrahydrofolate + L-serine. It participates in one-carbon metabolism; tetrahydrofolate interconversion. Catalyzes the interconversion of serine and glycine. In Flaveria pringlei, this protein is Serine hydroxymethyltransferase 1, mitochondrial.